A 204-amino-acid polypeptide reads, in one-letter code: MSQETYELKAEARERVGKGSARELRRNGLIPAVIYGDKQAPIAIAINTNEVTKRIHAGGFMTTVATIEVDGKKHKVLPKDYQLDPVRDFTLHVDFLRVSGNTQVTVEIPVHFINEAKSPGLKVGGVLNIVRHEVEVHCPADAIPEFFNIDLSGKKIGDSIHISEVTLPKSVTPVIDRDFTIATIVAPAGGVDESAAEAEGEAEA.

The protein belongs to the bacterial ribosomal protein bL25 family. CTC subfamily. Part of the 50S ribosomal subunit; part of the 5S rRNA/L5/L18/L25 subcomplex. Contacts the 5S rRNA. Binds to the 5S rRNA independently of L5 and L18.

In terms of biological role, this is one of the proteins that binds to the 5S RNA in the ribosome where it forms part of the central protuberance. The polypeptide is Large ribosomal subunit protein bL25 (Rhizobium etli (strain ATCC 51251 / DSM 11541 / JCM 21823 / NBRC 15573 / CFN 42)).